The chain runs to 94 residues: Integration host factor subunit beta (94 aa).

This sequence belongs to the bacterial histone-like protein family. As to quaternary structure, heterodimer of an alpha and a beta chain.

In terms of biological role, this protein is one of the two subunits of integration host factor, a specific DNA-binding protein that functions in genetic recombination as well as in transcriptional and translational control. The chain is Integration host factor subunit beta from Pectobacterium atrosepticum (strain SCRI 1043 / ATCC BAA-672) (Erwinia carotovora subsp. atroseptica).